The chain runs to 720 residues: Connector enhancer of kinase suppressor of ras 1 (720 aa).

The 64-residue stretch at 7–70 (WTPGKVATWL…LGGVEQLQAL (64 aa)) folds into the SAM domain. The CRIC domain occupies 78-164 (NLQSLTEGLL…QVLHEDGPAA (87 aa)). Residues 196–285 (KAVLEQVQLD…GLSLVLKKIP (90 aa)) form the PDZ domain. Residues 285–390 (PIPETPPQTP…RKKSKGLATR (106 aa)) are disordered. Residues 304–317 (RSPSLSLAPLSPRA) show a composition bias toward low complexity. Phosphoserine occurs at positions 307 and 314. A compositionally biased stretch (pro residues) spans 348-359 (EPLPIPPEPPAI). Residues 379–390 (VGRKKSKGLATR) are compositionally biased toward basic residues. One can recognise a PH domain in the interval 403-502 (RPDCDGWLLL…WVRHLITCIS (100 aa)). Residues 504–573 (YQSPGRAPPP…TSFGSLTDSS (70 aa)) are disordered. Residues 518–530 (CYSETEAEDPDDE) show a composition bias toward acidic residues. Residues 533 to 546 (SHSASPSPAQAGSP) show a composition bias toward low complexity. Over residues 553–571 (PAATPTQRSPRTSFGSLTD) the composition is skewed to polar residues. The stretch at 615–646 (QLNERVHRVRALQSTLKAKLQELQVLEEVLGD) forms a coiled coil. A disordered region spans residues 676 to 720 (QAEGSSHILTSDSTEQSPHSLPSDPEEHSHLCPLTSESSLRPPDL). The span at 678–695 (EGSSHILTSDSTEQSPHS) shows a compositional bias: polar residues.

Belongs to the CNKSR family. In terms of assembly, interacts with RHO and RALGDS. Phosphorylated on tyrosine.

It localises to the cytoplasm. It is found in the membrane. Functionally, may function as an adapter protein or regulator of Ras signaling pathways. This Homo sapiens (Human) protein is Connector enhancer of kinase suppressor of ras 1 (CNKSR1).